The sequence spans 878 residues: Interleukin-3 receptor class 2 subunit beta (878 aa).

The signal sequence occupies residues 1–22; sequence MDQQMALTWGLCYMALVALCWG. At 23–440 the chain is on the extracellular side; that stretch reads HEVTEEEETV…SNEYTWTTDW (418 aa). An intrachain disulfide couples Cys39 to Cys49. A glycan (N-linked (GlcNAc...) asparagine) is linked at Asn62. The cysteines at positions 78 and 95 are disulfide-linked. The region spanning 139-244 is the Fibronectin type-III 1 domain; that stretch reads PPKDIHISPS…PEVHWDSQPG (106 aa). Positions 223 to 244 are disordered; the sequence is GSSLSGRPSRWSPEVHWDSQPG. Cystine bridges form between Cys254–Cys264 and Cys293–Cys310. One can recognise a Fibronectin type-III 2 domain in the interval 343-438; that stretch reads QMEPPILNQT…EWSNEYTWTT (96 aa). Asn350 is a glycosylation site (N-linked (GlcNAc...) asparagine). The WSXWS motif signature appears at 427-431; the sequence is WSEWS. A helical membrane pass occupies residues 441–462; sequence VMPTLWIVLILVFLIFTLLLAL. Residues 463–878 lie on the Cytoplasmic side of the membrane; it reads HFGRVYGYRT…AIQFFKSLKY (416 aa). Positions 476-484 match the Box 1 motif motif; the sequence is WKEKIPNPS. Disordered stretches follow at residues 539–620 and 660–709; these read LTIE…GGSL and SSLE…MASD. Residues 554 to 570 are compositionally biased toward polar residues; the sequence is PDTTPAASSESTEQLPN. The segment covering 671–689 has biased composition (basic and acidic residues); the sequence is EPKENPPVELSVEKQEARD. Phosphoserine is present on residues Ser752 and Ser754. Position 765 is a phosphotyrosine (Tyr765). Disordered regions lie at residues 771 to 810 and 829 to 849; these read SVSQAATSPPGHPAPPVASSPTVIPGEPREEVGPASPHPE and PGSLSPHSKPPSPSLCSETED.

This sequence belongs to the type I cytokine receptor family. Type 4 subfamily. As to quaternary structure, heterodimer of an alpha and a beta subunit.

Its subcellular location is the membrane. In mouse, there are two classes of high-affinity IL3 receptors. One contains this IL3-specific beta subunit and the other contains the beta subunit also shared by high-affinity IL5 and GM-CSF receptors. The protein is Interleukin-3 receptor class 2 subunit beta (Csf2rb2) of Mus musculus (Mouse).